The primary structure comprises 75 residues: Sec-independent protein translocase protein TatA (75 aa).

A helical transmembrane segment spans residues 1 to 21 (MGSFSIWHWLIVLVIIALVFG). The tract at residues 45-75 (DASADKPADQVTQQRVSDDTIDVQAKEKSNS) is disordered.

The protein belongs to the TatA/E family. In terms of assembly, the Tat system comprises two distinct complexes: a TatABC complex, containing multiple copies of TatA, TatB and TatC subunits, and a separate TatA complex, containing only TatA subunits. Substrates initially bind to the TatABC complex, which probably triggers association of the separate TatA complex to form the active translocon.

It localises to the cell inner membrane. In terms of biological role, part of the twin-arginine translocation (Tat) system that transports large folded proteins containing a characteristic twin-arginine motif in their signal peptide across membranes. TatA could form the protein-conducting channel of the Tat system. This Bordetella bronchiseptica (strain ATCC BAA-588 / NCTC 13252 / RB50) (Alcaligenes bronchisepticus) protein is Sec-independent protein translocase protein TatA.